Reading from the N-terminus, the 120-residue chain is Protein Wnt-9 (120 aa).

The O-palmitoleoyl serine; by PORCN moiety is linked to residue serine 1. Cysteines 90 and 101 form a disulfide.

Belongs to the Wnt family. Post-translationally, palmitoleoylation is required for efficient binding to frizzled receptors. Depalmitoleoylation leads to Wnt signaling pathway inhibition.

It is found in the secreted. The protein resides in the extracellular space. It localises to the extracellular matrix. In terms of biological role, ligand for members of the frizzled family of seven transmembrane receptors. Probable developmental protein. May be a signaling molecule which affects the development of discrete regions of tissues. Is likely to signal over only few cell diameters. The polypeptide is Protein Wnt-9 (WNT-9) (Alopias vulpinus (Common thresher shark)).